The primary structure comprises 243 residues: Protein S40-7 (243 aa).

2 disordered regions span residues 1–68 (MNKN…KSGL) and 107–143 (SSTA…ERLP). Residues 10–20 (SSPSSLATISD) show a composition bias toward polar residues. Residues 22–32 (ADGELNEDDIF) show a composition bias toward acidic residues. Residues 47-67 (PVSSPAKQQTPARQLQRSKSG) are compositionally biased toward polar residues.

It belongs to the senescence regulator S40 family.

The protein localises to the cytoplasm. In Arabidopsis thaliana (Mouse-ear cress), this protein is Protein S40-7.